We begin with the raw amino-acid sequence, 456 residues long: Bifunctional protein GlmU (456 aa).

Residues 1–229 (MLNSAMSVVI…ISETDGVNNR (229 aa)) form a pyrophosphorylase region. UDP-N-acetyl-alpha-D-glucosamine is bound by residues 11–14 (LAAG), Lys-25, Gln-76, 81–82 (GT), 103–105 (YGD), Gly-140, Glu-154, Asn-169, and Asn-227. A Mg(2+)-binding site is contributed by Asp-105. Asn-227 provides a ligand contact to Mg(2+). The interval 230–250 (LQLSRLERIYQAEQAEKLLLS) is linker. The N-acetyltransferase stretch occupies residues 251-456 (GVMLRDPARF…QGWQRPVKKK (206 aa)). UDP-N-acetyl-alpha-D-glucosamine contacts are provided by Arg-333 and Lys-351. The Proton acceptor role is filled by His-363. UDP-N-acetyl-alpha-D-glucosamine is bound by residues Tyr-366 and Asn-377. Acetyl-CoA is bound by residues Ala-380, 386 to 387 (NY), Ser-405, Ala-423, and Arg-440.

In the N-terminal section; belongs to the N-acetylglucosamine-1-phosphate uridyltransferase family. It in the C-terminal section; belongs to the transferase hexapeptide repeat family. In terms of assembly, homotrimer. Requires Mg(2+) as cofactor.

Its subcellular location is the cytoplasm. The catalysed reaction is alpha-D-glucosamine 1-phosphate + acetyl-CoA = N-acetyl-alpha-D-glucosamine 1-phosphate + CoA + H(+). It carries out the reaction N-acetyl-alpha-D-glucosamine 1-phosphate + UTP + H(+) = UDP-N-acetyl-alpha-D-glucosamine + diphosphate. It participates in nucleotide-sugar biosynthesis; UDP-N-acetyl-alpha-D-glucosamine biosynthesis; N-acetyl-alpha-D-glucosamine 1-phosphate from alpha-D-glucosamine 6-phosphate (route II): step 2/2. Its pathway is nucleotide-sugar biosynthesis; UDP-N-acetyl-alpha-D-glucosamine biosynthesis; UDP-N-acetyl-alpha-D-glucosamine from N-acetyl-alpha-D-glucosamine 1-phosphate: step 1/1. It functions in the pathway bacterial outer membrane biogenesis; LPS lipid A biosynthesis. Its function is as follows. Catalyzes the last two sequential reactions in the de novo biosynthetic pathway for UDP-N-acetylglucosamine (UDP-GlcNAc). The C-terminal domain catalyzes the transfer of acetyl group from acetyl coenzyme A to glucosamine-1-phosphate (GlcN-1-P) to produce N-acetylglucosamine-1-phosphate (GlcNAc-1-P), which is converted into UDP-GlcNAc by the transfer of uridine 5-monophosphate (from uridine 5-triphosphate), a reaction catalyzed by the N-terminal domain. This Salmonella heidelberg (strain SL476) protein is Bifunctional protein GlmU.